Reading from the N-terminus, the 146-residue chain is 3-dehydroquinate dehydratase (146 aa).

The active-site Proton acceptor is Tyr23. Substrate is bound by residues Asn74, His80, and Asp87. His100 acts as the Proton donor in catalysis. Substrate-binding positions include 101–102 (IS) and Arg111.

Belongs to the type-II 3-dehydroquinase family. As to quaternary structure, homododecamer.

It catalyses the reaction 3-dehydroquinate = 3-dehydroshikimate + H2O. Its pathway is metabolic intermediate biosynthesis; chorismate biosynthesis; chorismate from D-erythrose 4-phosphate and phosphoenolpyruvate: step 3/7. In terms of biological role, catalyzes a trans-dehydration via an enolate intermediate. The protein is 3-dehydroquinate dehydratase of Bacillus cereus (strain B4264).